Consider the following 782-residue polypeptide: MQGEESLRILVEPEGDSFPLMEISTCETEASEQWDYVLVAQRHTQRDPRQARQQQFLEELRRKGFHIKVIRDQKQVFFGIRADNSVFGLYRTLLLEPEGPAPHAELAAPTTIPVTTSLRIRIVNFVVMNNKTSAGETFEDLMKDGVFEARFPLHKGEGRLKKTWARWRHMFREQPVDEIRNYFGEKVALYFVWLGWYTYMLVPAALTGLLVFLSGFSLFEASQISKEICEAHDILMCPLGDHSRRYQRLSETCTFAKLTHLFDNDGTVVFAIFMALWATVFLEIWKRQRARVVLHWDLYVWDEEQEEMALQLINCPDYKLRPYQHSYLRSTVILVLTLLMICLMIGMAHVLVVYRVLASALFSSSAVPFLEEQVTTAVVVTGALVHYVTIIIMTKINRCVALKLCDFEMPRTFSERESRFTIRFFTLQFFTHFSSLIYIAFILGRINGHPGKSTRLAGLWKLEECHASGCMMDLFVQMAIIMGLKQTLSNCVEYLVPWVTHKCRSLRASESGHLPRDPELRDWRRNYLLNPVNTFSLFDEFMEMMIQYGFTTIFVAAFPLAPLLALFSNLVEIRLDAIKMVWLQRRLVPRKAKDIGTWLQVLETIGVLAVIANGMVIAFTSEFIPRVVYKYRYSPCLKEGNSTVDCLKGYVNHSLSVFHTKDFQDPDGIEGSENVTLCRYRDYRNPPDYNFSEQFWFLLAIRLAFVILFEHVALCIKLIAAWFVPDIPQSVKNKVLEVKYQRLREKMWHGRQRLGGVGAGSRPPMPAHPTPASIFSARSTDV.

Residues 1–198 (MQGEESLRIL…LYFVWLGWYT (198 aa)) are Cytoplasmic-facing. Residues 199–219 (YMLVPAALTGLLVFLSGFSLF) traverse the membrane as a helical segment. The Extracellular segment spans residues 220 to 264 (EASQISKEICEAHDILMCPLGDHSRRYQRLSETCTFAKLTHLFDN). Serine 250 is modified (phosphoserine; by PKA). Residues 265–285 (DGTVVFAIFMALWATVFLEIW) traverse the membrane as a helical segment. The Cytoplasmic segment spans residues 286-331 (KRQRARVVLHWDLYVWDEEQEEMALQLINCPDYKLRPYQHSYLRST). Residues 332–352 (VILVLTLLMICLMIGMAHVLV) form a helical membrane-spanning segment. Residues 353–373 (VYRVLASALFSSSAVPFLEEQ) are Extracellular-facing. The chain crosses the membrane as a helical span at residues 374-394 (VTTAVVVTGALVHYVTIIIMT). Residues 395–423 (KINRCVALKLCDFEMPRTFSERESRFTIR) lie on the Cytoplasmic side of the membrane. The chain crosses the membrane as a helical span at residues 424 to 444 (FFTLQFFTHFSSLIYIAFILG). Residues 445 to 552 (RINGHPGKST…EMMIQYGFTT (108 aa)) are Extracellular-facing. The helical transmembrane segment at 553–573 (IFVAAFPLAPLLALFSNLVEI) threads the bilayer. At 574-604 (RLDAIKMVWLQRRLVPRKAKDIGTWLQVLET) the chain is on the cytoplasmic side. The helical transmembrane segment at 605–625 (IGVLAVIANGMVIAFTSEFIP) threads the bilayer. The Extracellular portion of the chain corresponds to 626-703 (RVVYKYRYSP…QFWFLLAIRL (78 aa)). Asparagine 641, asparagine 652, asparagine 674, and asparagine 690 each carry an N-linked (GlcNAc...) asparagine glycan. The helical transmembrane segment at 704-724 (AFVILFEHVALCIKLIAAWFV) threads the bilayer. At 725 to 782 (PDIPQSVKNKVLEVKYQRLREKMWHGRQRLGGVGAGSRPPMPAHPTPASIFSARSTDV) the chain is on the cytoplasmic side. The interval 756 to 782 (GVGAGSRPPMPAHPTPASIFSARSTDV) is disordered.

The protein belongs to the anoctamin family. Post-translationally, phosphorylated on serine residues by cAMP-dependent protein kinase A (PKA) which is essential for activation of its cation channel activity. Expressed in the kidney. Expressed in the olfactory epithelium.

Its subcellular location is the cell membrane. The protein resides in the endoplasmic reticulum. It carries out the reaction a 1,2-diacyl-sn-glycero-3-phospho-L-serine(in) = a 1,2-diacyl-sn-glycero-3-phospho-L-serine(out). The catalysed reaction is a beta-D-galactosyl-(1&lt;-&gt;1')-N-acylsphing-4-enine(out) = a beta-D-galactosyl-(1&lt;-&gt;1')-N-acylsphing-4-enine(in). The enzyme catalyses a 1,2-diacyl-sn-glycero-3-phosphocholine(in) = a 1,2-diacyl-sn-glycero-3-phosphocholine(out). It catalyses the reaction Ca(2+)(in) = Ca(2+)(out). It carries out the reaction Na(+)(in) = Na(+)(out). The catalysed reaction is K(+)(in) = K(+)(out). With respect to regulation, cation channel activity is activated via phosphorylation on serine residues by cAMP-dependent protein kinase A (PKA). In terms of biological role, PKA-activated nonselective cation channel. Discriminates poorly among cations but is more permeable to Ca(2+) ions than to monovalent cations. Acts as a calcium-activated calcium permeable channel which may operate as a endoplasmic reticulum (ER) Ca(2+)-leak channel, reducing the loading of the ER Ca(2+) store. Regulates intracellular Ca2+ signals, ion channel activity, and cytokine release in the renal tissue. Plays an important role in olfaction, amplifying cAMP-evoked cyclic nucleotide-gated (CNG) channel currents in the olfactory sensory neurons. Has calcium-dependent phospholipid scramblase activity; scrambles phosphatidylserine, phosphatidylcholine and galactosylceramide. Does not exhibit calcium-activated chloride channel (CaCC) activity. Can inhibit the activity of ANO1. The chain is Anoctamin-9 (ANO9) from Homo sapiens (Human).